The following is a 489-amino-acid chain: Rhamnulokinase (489 aa).

13-17 (ASSGR) is an ATP binding site. C68 and C222 are joined by a disulfide. Residues G83 and 236–238 (HDT) contribute to the substrate site. The active-site Proton acceptor is the D237. T259 contacts ATP. N296 is a substrate binding site. Residue Q304 coordinates ATP. Cysteines 353 and 370 form a disulfide. ATP is bound at residue G402. An intrachain disulfide couples C413 to C417.

Belongs to the rhamnulokinase family. Monomer. Mg(2+) is required as a cofactor.

The enzyme catalyses L-rhamnulose + ATP = L-rhamnulose 1-phosphate + ADP + H(+). It participates in carbohydrate degradation; L-rhamnose degradation; glycerone phosphate from L-rhamnose: step 2/3. Its function is as follows. Involved in the catabolism of L-rhamnose (6-deoxy-L-mannose). Catalyzes the transfer of the gamma-phosphate group from ATP to the 1-hydroxyl group of L-rhamnulose to yield L-rhamnulose 1-phosphate. The sequence is that of Rhamnulokinase from Escherichia coli O17:K52:H18 (strain UMN026 / ExPEC).